The sequence spans 378 residues: MKHSVHFGAGNIGRGFIGEILFKNGFHIDFVDVNNQIIHALNEKGKYEIEIAQKGQSRIEVTNVAGINSKEHPEQVIEAIQKTDIITTAIGPNILPFIAELLAKGIEARRVAGNTQALDVMACENMIGGSQFLYQEVKKYLSPEGLTFADNYIGFPNAAVDRIVPAQSHEDSLFVVVEPFNEWVVETKRLKNPDLRLKDVHYEEDLEPFIERKLFSVNSGHATSAYIGAHYGAKTILEALQNPNIKSRIESVLAEIRSLLIAKWNFDKKELENYHKVIIERLENPFIVDEVSRVARTPIRKLGYNERFIRPIRELKELSLSYKNLLKTVGYVFDYRDVNDEESIRLGELLAKQSVKDVVIQVTGLDDQELIEQIVEYI.

NAD(+) is bound at residue 4–15; it reads SVHFGAGNIGRG.

This sequence belongs to the mannitol dehydrogenase family.

The enzyme catalyses D-mannitol 1-phosphate + NAD(+) = beta-D-fructose 6-phosphate + NADH + H(+). In Streptococcus pneumoniae serotype 4 (strain ATCC BAA-334 / TIGR4), this protein is Mannitol-1-phosphate 5-dehydrogenase.